The chain runs to 96 residues: Pterin-4-alpha-carbinolamine dehydratase (96 aa).

It belongs to the pterin-4-alpha-carbinolamine dehydratase family.

It localises to the spore wall. The catalysed reaction is (4aS,6R)-4a-hydroxy-L-erythro-5,6,7,8-tetrahydrobiopterin = (6R)-L-erythro-6,7-dihydrobiopterin + H2O. Its function is as follows. Has a role in spore wall formation. In Schizosaccharomyces pombe (strain 972 / ATCC 24843) (Fission yeast), this protein is Pterin-4-alpha-carbinolamine dehydratase (omt2).